A 329-amino-acid polypeptide reads, in one-letter code: Glycerol-3-phosphate dehydrogenase [NAD(P)+] (329 aa).

Residues Trp11, Arg30, and Lys103 each contribute to the NADPH site. Sn-glycerol 3-phosphate is bound by residues Lys103, Gly132, and Ser134. Ala136 provides a ligand contact to NADPH. Residues Lys187, Asp240, Ser250, Arg251, and Asn252 each coordinate sn-glycerol 3-phosphate. The active-site Proton acceptor is Lys187. Arg251 is a binding site for NADPH. NADPH is bound by residues Val275 and Glu277.

Belongs to the NAD-dependent glycerol-3-phosphate dehydrogenase family.

The protein localises to the cytoplasm. The catalysed reaction is sn-glycerol 3-phosphate + NAD(+) = dihydroxyacetone phosphate + NADH + H(+). It catalyses the reaction sn-glycerol 3-phosphate + NADP(+) = dihydroxyacetone phosphate + NADPH + H(+). It participates in membrane lipid metabolism; glycerophospholipid metabolism. In terms of biological role, catalyzes the reduction of the glycolytic intermediate dihydroxyacetone phosphate (DHAP) to sn-glycerol 3-phosphate (G3P), the key precursor for phospholipid synthesis. The polypeptide is Glycerol-3-phosphate dehydrogenase [NAD(P)+] (Nitrosomonas europaea (strain ATCC 19718 / CIP 103999 / KCTC 2705 / NBRC 14298)).